The primary structure comprises 120 residues: Large ribosomal subunit protein eL8 (120 aa).

It belongs to the eukaryotic ribosomal protein eL8 family. In terms of assembly, part of the 50S ribosomal subunit. Probably part of the RNase P complex.

The protein resides in the cytoplasm. Multifunctional RNA-binding protein that recognizes the K-turn motif in ribosomal RNA, the RNA component of RNase P, box H/ACA, box C/D and box C'/D' sRNAs. The protein is Large ribosomal subunit protein eL8 of Halorubrum lacusprofundi (strain ATCC 49239 / DSM 5036 / JCM 8891 / ACAM 34).